The following is a 373-amino-acid chain: Probable pectin lyase D (373 aa).

The signal sequence occupies residues 1–24; that stretch reads MKYAAALTAVAALAARAAAVGVSG. 2 cysteine pairs are disulfide-bonded: Cys-82–Cys-101 and Cys-91–Cys-225. Residue Asn-128 is glycosylated (N-linked (GlcNAc...) asparagine). Arg-255 is a catalytic residue. Asn-274 carries N-linked (GlcNAc...) asparagine glycosylation. The cysteines at positions 321 and 329 are disulfide-linked. An N-linked (GlcNAc...) asparagine glycan is attached at Asn-348. Positions 354-366 are enriched in low complexity; sequence LPSADAASTSPAS. The tract at residues 354 to 373 is disordered; that stretch reads LPSADAASTSPASNAGQGNL.

Belongs to the polysaccharide lyase 1 family.

Its subcellular location is the secreted. It catalyses the reaction Eliminative cleavage of (1-&gt;4)-alpha-D-galacturonan methyl ester to give oligosaccharides with 4-deoxy-6-O-methyl-alpha-D-galact-4-enuronosyl groups at their non-reducing ends.. Functionally, pectinolytic enzymes consist of four classes of enzymes: pectin lyase, polygalacturonase, pectin methylesterase and rhamnogalacturonase. Among pectinolytic enzymes, pectin lyase is the most important in depolymerization of pectin, since it cleaves internal glycosidic bonds of highly methylated pectins. The sequence is that of Probable pectin lyase D (pelD) from Aspergillus niger (strain ATCC MYA-4892 / CBS 513.88 / FGSC A1513).